A 226-amino-acid chain; its full sequence is 2,3-bisphosphoglycerate-dependent phosphoglycerate mutase (226 aa).

Residues 8 to 15, 21 to 22, R58, 109 to 112, K120, 136 to 137, and 180 to 181 each bind substrate; these read RHGQSVWN, TG, ERMY, RR, and GN. H9 serves as the catalytic Tele-phosphohistidine intermediate. E109 (proton donor/acceptor) is an active-site residue.

The protein belongs to the phosphoglycerate mutase family. BPG-dependent PGAM subfamily.

The catalysed reaction is (2R)-2-phosphoglycerate = (2R)-3-phosphoglycerate. It functions in the pathway carbohydrate degradation; glycolysis; pyruvate from D-glyceraldehyde 3-phosphate: step 3/5. Catalyzes the interconversion of 2-phosphoglycerate and 3-phosphoglycerate. The polypeptide is 2,3-bisphosphoglycerate-dependent phosphoglycerate mutase (Chlamydia trachomatis serovar A (strain ATCC VR-571B / DSM 19440 / HAR-13)).